A 130-amino-acid chain; its full sequence is Small ribosomal subunit protein uS9 (130 aa).

The tract at residues 107–130 (DSREVERKKVGLRKARRRPQFSKR) is disordered. The segment covering 116–130 (VGLRKARRRPQFSKR) has biased composition (basic residues).

The protein belongs to the universal ribosomal protein uS9 family.

This Marinomonas sp. (strain MWYL1) protein is Small ribosomal subunit protein uS9.